Consider the following 364-residue polypeptide: Chorismate synthase (364 aa).

Arg47 is an NADP(+) binding site. FMN contacts are provided by residues 125–127, Gly285, 300–304, and Arg327; these read RFS and KPTPS.

Belongs to the chorismate synthase family. Homotetramer. FMNH2 is required as a cofactor.

The catalysed reaction is 5-O-(1-carboxyvinyl)-3-phosphoshikimate = chorismate + phosphate. Its pathway is metabolic intermediate biosynthesis; chorismate biosynthesis; chorismate from D-erythrose 4-phosphate and phosphoenolpyruvate: step 7/7. Functionally, catalyzes the anti-1,4-elimination of the C-3 phosphate and the C-6 proR hydrogen from 5-enolpyruvylshikimate-3-phosphate (EPSP) to yield chorismate, which is the branch point compound that serves as the starting substrate for the three terminal pathways of aromatic amino acid biosynthesis. This reaction introduces a second double bond into the aromatic ring system. The sequence is that of Chorismate synthase from Dehalococcoides mccartyi (strain ATCC BAA-2266 / KCTC 15142 / 195) (Dehalococcoides ethenogenes (strain 195)).